We begin with the raw amino-acid sequence, 107 residues long: Ferredoxin 1 (107 aa).

4Fe-4S ferredoxin-type domains are found at residues 2-30 (TFVVTDNCIKCKYTDCVEVCPVDCFYEGP) and 31-60 (NFLVIHPDECIDCALCEPECPAQAIFSEDE). Positions 9 and 17 each coordinate [3Fe-4S] cluster. [4Fe-4S] cluster-binding residues include Cys21, Cys40, Cys43, and Cys46. Cys50 is a binding site for [3Fe-4S] cluster.

[4Fe-4S] cluster serves as cofactor. The cofactor is [3Fe-4S] cluster.

Its function is as follows. Ferredoxins are iron-sulfur proteins that transfer electrons in a wide variety of metabolic reactions. The chain is Ferredoxin 1 (fdxA) from Pseudomonas putida (strain ATCC 47054 / DSM 6125 / CFBP 8728 / NCIMB 11950 / KT2440).